We begin with the raw amino-acid sequence, 172 residues long: uncharacterized protein (172 aa).

The PfpI endopeptidase domain occupies 3 to 171 (KKVAIILSNE…FNREIVKQLQ (169 aa)).

It belongs to the peptidase C56 family.

This is an uncharacterized protein from Staphylococcus haemolyticus (strain JCSC1435).